Consider the following 511-residue polypeptide: Sterol 14-alpha demethylase resB (511 aa).

A helical transmembrane segment spans residues 3-23 (ILWIVAYALLAFAASIALNLV). Cys451 provides a ligand contact to heme.

Belongs to the cytochrome P450 family. It depends on heme as a cofactor.

The protein localises to the membrane. The catalysed reaction is a 14alpha-methyl steroid + 3 reduced [NADPH--hemoprotein reductase] + 3 O2 = a Delta(14) steroid + formate + 3 oxidized [NADPH--hemoprotein reductase] + 4 H2O + 4 H(+). The enzyme catalyses a 14alpha-methyl steroid + reduced [NADPH--hemoprotein reductase] + O2 = a 14alpha-hydroxymethyl steroid + oxidized [NADPH--hemoprotein reductase] + H2O + H(+). It carries out the reaction a 14alpha-hydroxymethyl steroid + reduced [NADPH--hemoprotein reductase] + O2 = a 14alpha-formyl steroid + oxidized [NADPH--hemoprotein reductase] + 2 H2O + H(+). It catalyses the reaction a 14alpha-formyl steroid + reduced [NADPH--hemoprotein reductase] + O2 = a Delta(14) steroid + formate + oxidized [NADPH--hemoprotein reductase] + H2O + 2 H(+). The catalysed reaction is lanosterol + 3 reduced [NADPH--hemoprotein reductase] + 3 O2 = 4,4-dimethyl-5alpha-cholesta-8,14,24-trien-3beta-ol + formate + 3 oxidized [NADPH--hemoprotein reductase] + 4 H2O + 4 H(+). The enzyme catalyses lanosterol + reduced [NADPH--hemoprotein reductase] + O2 = 32-hydroxylanosterol + oxidized [NADPH--hemoprotein reductase] + H2O + H(+). It carries out the reaction 32-hydroxylanosterol + reduced [NADPH--hemoprotein reductase] + O2 = 32-oxolanosterol + oxidized [NADPH--hemoprotein reductase] + 2 H2O + H(+). It catalyses the reaction 32-oxolanosterol + reduced [NADPH--hemoprotein reductase] + O2 = 4,4-dimethyl-5alpha-cholesta-8,14,24-trien-3beta-ol + formate + oxidized [NADPH--hemoprotein reductase] + H2O + 2 H(+). The catalysed reaction is eburicol + 3 reduced [NADPH--hemoprotein reductase] + 3 O2 = 14-demethyleburicol + formate + 3 oxidized [NADPH--hemoprotein reductase] + 4 H2O + 4 H(+). The enzyme catalyses eburicol + reduced [NADPH--hemoprotein reductase] + O2 = 32-hydroxyeburicol + oxidized [NADPH--hemoprotein reductase] + H2O + H(+). It carries out the reaction 32-hydroxyeburicol + reduced [NADPH--hemoprotein reductase] + O2 = 32-oxoeburicol + oxidized [NADPH--hemoprotein reductase] + 2 H2O + H(+). It catalyses the reaction 32-oxoeburicol + reduced [NADPH--hemoprotein reductase] + O2 = 14-demethyleburicol + formate + oxidized [NADPH--hemoprotein reductase] + H2O + 2 H(+). Its function is as follows. Sterol 14-alpha demethylase; part of the gene cluster that mediates the biosynthesis of the tetrahydropyranyl antifungal agent restricticin that acts as an inhibitor of CYP51 and blocks the ergosterol biosynthesis. Sterol 14-alpha-demethylase plays a critical role in the biosynthesis of ergosterol, the major sterol component in fungal membranes that participates in a variety of functions. ResB acts as a self-resistant CYP51 that contains mutations found in CYP51s isolated from azole resistance strains and that is not inhibited by the final product of the cluster, restricticin. This is Sterol 14-alpha demethylase resB from Aspergillus sclerotiorum.